Reading from the N-terminus, the 267-residue chain is Small ribosomal subunit protein uS2 (267 aa).

The disordered stretch occupies residues 234-267; the sequence is DNAEEELAEAISQEEPSAAEELPDDMADNENEFE. The span at 250 to 267 shows a compositional bias: acidic residues; sequence SAAEELPDDMADNENEFE.

Belongs to the universal ribosomal protein uS2 family.

This is Small ribosomal subunit protein uS2 from Dichelobacter nodosus (strain VCS1703A).